An 834-amino-acid polypeptide reads, in one-letter code: Periplasmic nitrate reductase (834 aa).

Positions 1–32 form a signal peptide, tat-type signal; the sequence is MTDMKIDRRQMLKLEAAAIAAAAAGMPSTSLA. The 4Fe-4S Mo/W bis-MGD-type domain occupies 44–100; it reads LKWDKAACRFCGTGCSVMVATKDNRVVATHGDIKAEVNRGLNCVKGYFLSKIMYGHD. The [4Fe-4S] cluster site is built by Cys-51, Cys-54, Cys-58, and Cys-86. Mo-bis(molybdopterin guanine dinucleotide)-binding positions include Lys-88, Gln-155, Asn-180, Cys-184, 217 to 224, 248 to 252, 267 to 269, Met-378, Gln-382, Asn-488, 514 to 515, Lys-537, Asp-564, and 724 to 733; these read WGSNMAEM, STFEH, QTD, SD, and TGRVVEHWHS. Trp-800 is a substrate binding site. Mo-bis(molybdopterin guanine dinucleotide) contacts are provided by Asn-808 and Lys-825.

This sequence belongs to the prokaryotic molybdopterin-containing oxidoreductase family. NasA/NapA/NarB subfamily. As to quaternary structure, component of the periplasmic nitrate reductase NapAB complex composed of NapA and NapB. [4Fe-4S] cluster is required as a cofactor. Requires Mo-bis(molybdopterin guanine dinucleotide) as cofactor. Predicted to be exported by the Tat system. The position of the signal peptide cleavage has not been experimentally proven.

Its subcellular location is the periplasm. The catalysed reaction is 2 Fe(II)-[cytochrome] + nitrate + 2 H(+) = 2 Fe(III)-[cytochrome] + nitrite + H2O. In terms of biological role, catalytic subunit of the periplasmic nitrate reductase complex NapAB. Receives electrons from NapB and catalyzes the reduction of nitrate to nitrite. This Bradyrhizobium sp. (strain BTAi1 / ATCC BAA-1182) protein is Periplasmic nitrate reductase.